The following is a 1498-amino-acid chain: MIFSQGASPLKGDFTRIKFSIASPESILAHSRGEVLKPETINYRTFKPERDGLMCEKIFGPTKDWECYCGKYKRVRYKGIICDRCGVEVTTKSVRRERMGHISLAVPVVHTWFFRSVPSKIGALLDLSTKELERIIYYEVYVVINPGEPGEKQGIKKLDRLTEEQYFQIITEYEDNQDLEDSDPQKFVAKMGGEAIHMLLKNLDLDGSAVLLRKILKESSSEQKRADALKRLKVVEAFRKSYEPQRKVRKKSTGLFPEDDIPEPYIYEGNKPEYMVMEAIPVIPPELRPLVPLEGGRFATSDLNDLYRRVIIRNNRLKKLIDIRAPEVILRNEKRMLQEAVDALFDNSRKANAVKTGESNRPLKSLSDALKGKQGRFRQNLLGKRVDYSGRSVIVVGPELKLHECGLPKSMAIELFQPFVIRRLVERGIAKSVKSAKKLIDKKDPIVWDVLEKVIDGRPVLLNRAPTLHRLGIQAFQPTLIEGKAIQIHPLVCTAFNADFDGDQMAVHVPLSQEAQLEASLLMLSSHNLILPQSGKPVTVPSQDMVLGMYYLTKSRPGSLGEAGIFYSREDVLIAHNEGRLGLHAQIFVQYDGRLDQKFDSLRALDWILEAGTEKYEWLKKQLEKKTMLLTTVGRVIFNESVPEEIGFINRVIDKKVAKELIGRLSSEVGNVETARFLDNIKQVGFHYAMKGGLSVGLSDAIVPETKAKHIKAAQRDSTRVVKEYNRGTLTDNERYNQIVDVWQKTSNIVAEESYQKLKKDREGFNPLYMMLDSGARGSREQVRQLTGMRGLIARPQKSMSGQPGEIIENPIISNLKEGLTVLEYFISTHGARKGLSDTSLKTADAGYLTRRLHDVAQDVIVTMDDCGTTRGLFIQRNIEEETSGQIKFREKIKGRVAARDIYDTITGNVIVPAGETITEELAEIIQDTPGVEEAEIRSVLTCESKIGICSRCYGTNLSVHKLVEIGEAVGVIAAQSIGEPGTQLTLRTFHQGGTAQGGISETETKAFNEGTVEFEDIKTVYHAAINEDGVEEQHTIVIQKNGKINIVDAESGKVLKRYVVPHGAHLAVAPGDQVKKDQVLFSSEPNSTQIIAEINGTVKFADIEKGVTYKEEVDPQTGFAQHTIINWRSKLRATETREPRLMIIDASGEVQKTYPVPIKSNLYVEDGQKVVPGDIMAKVPRNLDRVGGDITAGLPKVTELFEARIPTDPAIVTEIDGYVSFGSQRRSSKEIKVKNDFGEEKVYYVQVGKHVLANEGDEVKAGEPLTDGAVSPQDILRIQGPNAVQQYLVNEIQKVYQINAGVEINDKHLEVIVRQMLQKVRVEEPGDTELLPGDLIDRSVFLEANENVSEKVRISERGDAPPRIQDDQLHRLREITKLNRDLRKNEKQLIAFEPALQATSHPVLLGITSAALQTESVISAASFQETTKVLTDAAVAGKVDHLAGLKENVIVGKLIPAGTGLKKYKAIRLGGEAIEASDAAAAAAEAEAQARREAMDE.

Zn(2+) is bound by residues C67, C69, C82, and C85. Mg(2+) contacts are provided by D499, D501, and D503. C867, C943, C950, and C953 together coordinate Zn(2+).

The protein belongs to the RNA polymerase beta' chain family. The RNAP catalytic core consists of 2 alpha, 1 beta, 1 beta' and 1 omega subunit. When a sigma factor is associated with the core the holoenzyme is formed, which can initiate transcription. The cofactor is Mg(2+). Zn(2+) serves as cofactor.

The enzyme catalyses RNA(n) + a ribonucleoside 5'-triphosphate = RNA(n+1) + diphosphate. Its function is as follows. DNA-dependent RNA polymerase catalyzes the transcription of DNA into RNA using the four ribonucleoside triphosphates as substrates. The sequence is that of DNA-directed RNA polymerase subunit beta' from Chlorobium luteolum (strain DSM 273 / BCRC 81028 / 2530) (Pelodictyon luteolum).